Here is a 187-residue protein sequence, read N- to C-terminus: UPF0340 protein SPN23F05980 (187 aa).

The protein belongs to the UPF0340 family.

The protein is UPF0340 protein SPN23F05980 of Streptococcus pneumoniae (strain ATCC 700669 / Spain 23F-1).